The chain runs to 260 residues: MSAYDKVMAARSKDRPTSKDYIKNIFTNFTEFHGDRRFGDDNAVVAGIGLLGNRPVTVIALEKGQDTKERLSRNFGSAHPEGYRKALRQMKLAEKFNRPVVCFIDTSGAYCGIGAEERGQGQAIAENLITMIDLKVPIISILIGEGGSGGALALAVADEVWMLENAIYSVISPEGCASILWKDSARVKEVAECLKLTADDLYSLGVTDMVIKENGGDFIRVYEDLSNKILHSINKYYEFSADKLVKMRFEKYQRLGMITQ.

A CoA carboxyltransferase C-terminal domain is found at 1-235 (MSAYDKVMAA…SNKILHSINK (235 aa)).

The protein belongs to the AccA family. In terms of assembly, acetyl-CoA carboxylase is a heterohexamer composed of biotin carboxyl carrier protein (AccB), biotin carboxylase (AccC) and two subunits each of ACCase subunit alpha (AccA) and ACCase subunit beta (AccD).

It is found in the cytoplasm. The catalysed reaction is N(6)-carboxybiotinyl-L-lysyl-[protein] + acetyl-CoA = N(6)-biotinyl-L-lysyl-[protein] + malonyl-CoA. It participates in lipid metabolism; malonyl-CoA biosynthesis; malonyl-CoA from acetyl-CoA: step 1/1. Its function is as follows. Component of the acetyl coenzyme A carboxylase (ACC) complex. First, biotin carboxylase catalyzes the carboxylation of biotin on its carrier protein (BCCP) and then the CO(2) group is transferred by the carboxyltransferase to acetyl-CoA to form malonyl-CoA. In Ruminiclostridium cellulolyticum (strain ATCC 35319 / DSM 5812 / JCM 6584 / H10) (Clostridium cellulolyticum), this protein is Acetyl-coenzyme A carboxylase carboxyl transferase subunit alpha.